Consider the following 454-residue polypeptide: Histidine--tRNA ligase (454 aa).

It belongs to the class-II aminoacyl-tRNA synthetase family. Homodimer.

It is found in the cytoplasm. It catalyses the reaction tRNA(His) + L-histidine + ATP = L-histidyl-tRNA(His) + AMP + diphosphate + H(+). This chain is Histidine--tRNA ligase, found in Porphyromonas gingivalis (strain ATCC BAA-308 / W83).